A 375-amino-acid chain; its full sequence is 23S rRNA (uracil(747)-C(5))-methyltransferase RlmC (375 aa).

Residues cysteine 3, cysteine 11, cysteine 14, and cysteine 87 each contribute to the [4Fe-4S] cluster site. The S-adenosyl-L-methionine site is built by glutamine 212, phenylalanine 241, glutamate 262, and asparagine 307. Cysteine 334 serves as the catalytic Nucleophile.

It belongs to the class I-like SAM-binding methyltransferase superfamily. RNA M5U methyltransferase family. RlmC subfamily.

It catalyses the reaction uridine(747) in 23S rRNA + S-adenosyl-L-methionine = 5-methyluridine(747) in 23S rRNA + S-adenosyl-L-homocysteine + H(+). Catalyzes the formation of 5-methyl-uridine at position 747 (m5U747) in 23S rRNA. The polypeptide is 23S rRNA (uracil(747)-C(5))-methyltransferase RlmC (Salmonella enteritidis PT4 (strain P125109)).